The primary structure comprises 857 residues: DNA mismatch repair protein MutS (857 aa).

613–620 (GPNMGGKS) is an ATP binding site. The disordered stretch occupies residues 797-820 (TSLPHEQPAAHKAKDAPQVPHQSD).

Belongs to the DNA mismatch repair MutS family.

Functionally, this protein is involved in the repair of mismatches in DNA. It is possible that it carries out the mismatch recognition step. This protein has a weak ATPase activity. The chain is DNA mismatch repair protein MutS from Pseudomonas putida (strain ATCC 700007 / DSM 6899 / JCM 31910 / BCRC 17059 / LMG 24140 / F1).